The sequence spans 596 residues: Signal peptide peptidase-like 2B (596 aa).

An N-terminal signal peptide occupies residues 1 to 21 (MAARWAQFLLFSLLSLPQVYC). The Lumenal segment spans residues 22 to 170 (EYGMVHVLSE…APNEPVLDYN (149 aa)). Residues 53 to 147 (HDLGKASLLQ…LLSYSDMLDI (95 aa)) enclose the PA domain. An N-linked (GlcNAc...) asparagine glycan is attached at Asn-93. Residues 171 to 191 (MVIIFVMAVGTVAIGGYWAGS) traverse the membrane as a helical segment. Over 192 to 219 (RDVKERYMKHKRDDGAEKHEDETVDVTP) the chain is Cytoplasmic. The helical transmembrane segment at 220 to 240 (IMICVFVVMCCSMLVLLYFFY) threads the bilayer. At 241–242 (DH) the chain is on the lumenal side. Residues 243–263 (LVYVIIGIFCLAASIGLYSCL) traverse the membrane as a helical segment. Residues 264 to 289 (SPFVRRFPLGKCRIPDNNLPYFHKRP) lie on the Cytoplasmic side of the membrane. Residues 290 to 310 (QVRILLLAVFCISVSVVWGVF) traverse the membrane as a helical segment. The Lumenal segment spans residues 311–315 (RNEDQ). The helical transmembrane segment at 316–336 (WAWVLQDALGIAFCLYMLKTI) threads the bilayer. The Cytoplasmic portion of the chain corresponds to 337 to 344 (RLPTFKGC). Residues 345-365 (TLLLLVLFVYDVFFVFITPFL) traverse the membrane as a helical segment. Asp-355 is an active-site residue. Over 366 to 408 (TKTGESIMVEVAAGPSDSATHEKLPMVLKVPRLNSSPLALCDR) the chain is Lumenal. A helical membrane pass occupies residues 409 to 429 (PFSLLGFGDILVPGLLVAYCH). Asp-417 is a catalytic residue. The Cytoplasmic portion of the chain corresponds to 430-441 (RFDIQVQSSRVY). The helical transmembrane segment at 442–462 (FVACTIAYGIGLLVTFVALAL) threads the bilayer. At 463–466 (MQMG) the chain is on the lumenal side. Residues 467–487 (QPALLYLVPCTLITSFSVALW) traverse the membrane as a helical segment. The short motif at 468–470 (PAL) is the PAL element. The Cytoplasmic segment spans residues 488–596 (RKELAMFWTG…SLNLEQKQLE (109 aa)). The interval 543 to 596 (KELHSPTLAAEEPADNDTKTEQSEVSIAQSEEAAGHNKDDLESKSLNLEQKQLE) is disordered. A compositionally biased stretch (basic and acidic residues) spans 575-585 (AAGHNKDDLES). A compositionally biased stretch (polar residues) spans 586-596 (KSLNLEQKQLE).

It belongs to the peptidase A22B family.

The protein resides in the cell membrane. The protein localises to the golgi apparatus membrane. Its subcellular location is the lysosome membrane. It localises to the endosome membrane. It is found in the membrane. Intramembrane-cleaving aspartic protease (I-CLiP) that cleaves type II membrane signal peptides in the hydrophobic plane of the membrane. This chain is Signal peptide peptidase-like 2B, found in Gallus gallus (Chicken).